A 168-amino-acid polypeptide reads, in one-letter code: Peptidoglycan-associated lipoprotein (168 aa).

Residues 1–21 form the signal peptide; it reads MEMLKFGKFAALALAMAVAVG. Cys-22 is lipidated: N-palmitoyl cysteine. A lipid anchor (S-diacylglycerol cysteine) is attached at Cys-22. Positions 56–168 constitute an OmpA-like domain; that stretch reads SDEAALRAIT…AQNRRVELKK (113 aa). Residues 147-168 are disordered; the sequence is RPVATGHDEQSWAQNRRVELKK.

This sequence belongs to the Pal lipoprotein family. As to quaternary structure, the Tol-Pal system is composed of five core proteins: the inner membrane proteins TolA, TolQ and TolR, the periplasmic protein TolB and the outer membrane protein Pal. They form a network linking the inner and outer membranes and the peptidoglycan layer.

It localises to the cell outer membrane. In terms of biological role, part of the Tol-Pal system, which plays a role in outer membrane invagination during cell division and is important for maintaining outer membrane integrity. This is Peptidoglycan-associated lipoprotein from Pseudomonas aeruginosa (strain ATCC 15692 / DSM 22644 / CIP 104116 / JCM 14847 / LMG 12228 / 1C / PRS 101 / PAO1).